The following is a 162-amino-acid chain: Transcription antitermination protein RfaH (162 aa).

Belongs to the RfaH family. As to quaternary structure, interacts with both the nontemplate DNA and the RNA polymerase (RNAP). Monomer in solution.

In terms of biological role, enhances distal genes transcription elongation in a specialized subset of operons that encode extracytoplasmic components. RfaH is recruited into a multi-component RNA polymerase complex by the ops element, which is a short conserved DNA sequence located downstream of the main promoter of these operons. Once bound, RfaH suppresses pausing and inhibits Rho-dependent and intrinsic termination at a subset of sites. Termination signals are bypassed, which allows complete synthesis of long RNA chains. Enhances expression of several operons involved in synthesis of lipopolysaccharides, exopolysaccharides, hemolysin, and sex factor. Also negatively controls expression and surface presentation of AG43 and possibly another AG43-independent factor that mediates cell-cell interactions and biofilm formation. This is Transcription antitermination protein RfaH from Escherichia coli (strain K12).